A 519-amino-acid polypeptide reads, in one-letter code: Acetylcholine receptor subunit gamma (519 aa).

The first 22 residues, 1 to 22 (MQGGQRPHLLLLLLAVCLGAQS), serve as a signal peptide directing secretion. At 23–240 (RNQEERLLAD…VVFYLLIQRK (218 aa)) the chain is on the extracellular side. N-linked (GlcNAc...) asparagine glycosylation is found at Asn-52 and Asn-163. The cysteines at positions 150 and 164 are disulfide-linked. The next 3 helical transmembrane spans lie at 241–265 (PLFYVINIIAPCVLISSVAILIYFL), 274–292 (CTVATNVLLAQTVFLFLVA), and 308–329 (YLTFLMVVTILIVVNSVVVLNV). At 330–476 (SLRSPHTHSM…WLLVGRVLDR (147 aa)) the chain is on the cytoplasmic side. The chain crosses the membrane as a helical span at residues 477-497 (VCFLAMLSLFICGTAGIFLMA).

The protein belongs to the ligand-gated ion channel (TC 1.A.9) family. Acetylcholine receptor (TC 1.A.9.1) subfamily. Gamma/CHRNG sub-subfamily. In terms of assembly, pentamer of two alpha chains, and one each of the beta, delta, and gamma (in immature muscle) or epsilon (in mature muscle) chains. As to expression, at least in myotubes of skeletal muscle.

The protein resides in the postsynaptic cell membrane. It is found in the cell membrane. The catalysed reaction is K(+)(in) = K(+)(out). It catalyses the reaction Na(+)(in) = Na(+)(out). In terms of biological role, after binding acetylcholine, the AChR responds by an extensive change in conformation that affects all subunits and leads to opening of an ion-conducting channel across the plasma membrane. In Mus musculus (Mouse), this protein is Acetylcholine receptor subunit gamma (Chrng).